The primary structure comprises 94 residues: Small ribosomal subunit protein uS19m (94 aa).

The protein belongs to the universal ribosomal protein uS19 family.

The protein resides in the mitochondrion. The polypeptide is Small ribosomal subunit protein uS19m (RPS19) (Petunia hybrida (Petunia)).